The primary structure comprises 170 residues: Phosphopantetheine adenylyltransferase (170 aa).

Position 14 (threonine 14) interacts with substrate. Residues 14–15 (TF) and histidine 22 each bind ATP. Lysine 46, leucine 78, and arginine 92 together coordinate substrate. ATP is bound by residues 93–95 (GLR), glutamate 103, and 128–134 (WLYISST).

This sequence belongs to the bacterial CoaD family. In terms of assembly, homohexamer. Mg(2+) is required as a cofactor.

It is found in the cytoplasm. The enzyme catalyses (R)-4'-phosphopantetheine + ATP + H(+) = 3'-dephospho-CoA + diphosphate. It participates in cofactor biosynthesis; coenzyme A biosynthesis; CoA from (R)-pantothenate: step 4/5. Reversibly transfers an adenylyl group from ATP to 4'-phosphopantetheine, yielding dephospho-CoA (dPCoA) and pyrophosphate. This chain is Phosphopantetheine adenylyltransferase, found in Oleidesulfovibrio alaskensis (strain ATCC BAA-1058 / DSM 17464 / G20) (Desulfovibrio alaskensis).